Consider the following 903-residue polypeptide: Protein translocase subunit SecA (903 aa).

Residues Gln-87, 105–109 (GEGKT), and Asp-507 each bind ATP. Disordered stretches follow at residues 565–584 (ESRR…GDPG) and 855–877 (AEPG…LASQ). Zn(2+) is bound by residues Cys-887, Cys-889, Cys-898, and His-899.

Belongs to the SecA family. In terms of assembly, monomer and homodimer. Part of the essential Sec protein translocation apparatus which comprises SecA, SecYEG and auxiliary proteins SecDF-YajC and YidC. It depends on Zn(2+) as a cofactor.

It is found in the cell inner membrane. It localises to the cytoplasm. It catalyses the reaction ATP + H2O + cellular proteinSide 1 = ADP + phosphate + cellular proteinSide 2.. Functionally, part of the Sec protein translocase complex. Interacts with the SecYEG preprotein conducting channel. Has a central role in coupling the hydrolysis of ATP to the transfer of proteins into and across the cell membrane, serving both as a receptor for the preprotein-SecB complex and as an ATP-driven molecular motor driving the stepwise translocation of polypeptide chains across the membrane. The protein is Protein translocase subunit SecA of Chromobacterium violaceum (strain ATCC 12472 / DSM 30191 / JCM 1249 / CCUG 213 / NBRC 12614 / NCIMB 9131 / NCTC 9757 / MK).